Reading from the N-terminus, the 180-residue chain is Translation initiation factor IF-3 (180 aa).

The protein belongs to the IF-3 family. As to quaternary structure, monomer.

It is found in the cytoplasm. Its function is as follows. IF-3 binds to the 30S ribosomal subunit and shifts the equilibrium between 70S ribosomes and their 50S and 30S subunits in favor of the free subunits, thus enhancing the availability of 30S subunits on which protein synthesis initiation begins. The polypeptide is Translation initiation factor IF-3 (Xylella fastidiosa (strain Temecula1 / ATCC 700964)).